Here is a 205-residue protein sequence, read N- to C-terminus: Urease accessory protein UreG (205 aa).

Residue glycine 10–threonine 17 coordinates GTP.

This sequence belongs to the SIMIBI class G3E GTPase family. UreG subfamily. Homodimer. UreD, UreF and UreG form a complex that acts as a GTP-hydrolysis-dependent molecular chaperone, activating the urease apoprotein by helping to assemble the nickel containing metallocenter of UreC. The UreE protein probably delivers the nickel.

Its subcellular location is the cytoplasm. In terms of biological role, facilitates the functional incorporation of the urease nickel metallocenter. This process requires GTP hydrolysis, probably effectuated by UreG. This Corynebacterium urealyticum (strain ATCC 43042 / DSM 7109) protein is Urease accessory protein UreG.